The primary structure comprises 628 residues: CMP-5'-(3-aminopropyl)phosphonate synthase (628 aa).

The tract at residues 1 to 255 is mobA-like NTP transferase; sequence MNENRTFATP…DPGDQRQADF (255 aa). A decarboxylase region spans residues 278 to 628; that stretch reads GVTDHALLYN…TTEGAGRADG (351 aa). K466 carries the post-translational modification N6-(pyridoxal phosphate)lysine.

This sequence in the N-terminal section; belongs to the MobA family. It in the C-terminal section; belongs to the class-I pyridoxal-phosphate-dependent aminotransferase family. It depends on Mg(2+) as a cofactor. The cofactor is pyridoxal 5'-phosphate.

The enzyme catalyses 2-amino-4-phosphonobutanoate + CTP = CMP-5'-(3-amino-3-carboxypropyl)phosphonate + diphosphate. The catalysed reaction is CMP-5'-(3-amino-3-carboxypropyl)phosphonate + H(+) = CMP-5'-(3-aminopropyl)phosphonate + CO2. Its pathway is antibiotic biosynthesis. Its function is as follows. Bifunctional cytidylyltransferase/decarboxylase involved in the biosynthesis of the phosphonate antibiotic FR-900098, a potent antimalarial agent that acts as an inhibitor of 1-deoxy-D-xylulose 5-phosphate reductoisomerase (DXR), the first enzyme in the nonmevalonate pathway for isoprenoid biosynthesis. Catalyzes the condensation of 2-amino-4-phosphonobutyrate (2APn) and CTP to form CMP-5'-2APn and then decarboxylates CMP-5'-2APn to yield CMP-5'-(3-aminopropyl)phosphonate (CMP-5'-3APn). The polypeptide is CMP-5'-(3-aminopropyl)phosphonate synthase (Streptomyces rubellomurinus (strain ATCC 31215)).